Here is a 100-residue protein sequence, read N- to C-terminus: NADH-quinone oxidoreductase subunit K (100 aa).

3 helical membrane passes run 1–21 (MIGL…GLAG), 28–48 (ILLL…GFVA), and 64–84 (FIIA…ILWF).

This sequence belongs to the complex I subunit 4L family. As to quaternary structure, NDH-1 is composed of 14 different subunits. Subunits NuoA, H, J, K, L, M, N constitute the membrane sector of the complex.

Its subcellular location is the cell inner membrane. It catalyses the reaction a quinone + NADH + 5 H(+)(in) = a quinol + NAD(+) + 4 H(+)(out). Its function is as follows. NDH-1 shuttles electrons from NADH, via FMN and iron-sulfur (Fe-S) centers, to quinones in the respiratory chain. The immediate electron acceptor for the enzyme in this species is believed to be ubiquinone. Couples the redox reaction to proton translocation (for every two electrons transferred, four hydrogen ions are translocated across the cytoplasmic membrane), and thus conserves the redox energy in a proton gradient. The protein is NADH-quinone oxidoreductase subunit K of Helicobacter pylori (strain P12).